Here is a 2145-residue protein sequence, read N- to C-terminus: Glutamate synthase [NADH] (2145 aa).

The propeptide occupies 1–53; the sequence is MPVLKSDNFDPLEEAYEGGTIQNYNDEHHLHKSWANVIPDKRGLYDPDYEHDA. The active-site For GATase activity is the C54. Residues 54 to 455 form the Glutamine amidotransferase type-2 domain; the sequence is CGVGFVANKH…PGDLFLVDTQ (402 aa). Residue 1132 to 1189 coordinates FMN; that stretch reads LAETHQTLVLNDLRRNVVVQTDGQLRTGFDIAVAVLLGAESFTLATVPLIAMGCVMLR. C1185, C1191, and C1196 together coordinate [3Fe-4S] cluster. The stretch at 1551–1600 forms a coiled coil; the sequence is KKVLLKEKAEAAKAKAKATSEYLKKFRSNQEVDDEVNTLLIANQKAKEQE. Residue 1928 to 1942 participates in NAD(+) binding; it reads GGGDTGNDCLGTSVR. T2070 bears the Phosphothreonine mark.

Belongs to the glutamate synthase family. Homotrimer. [3Fe-4S] cluster is required as a cofactor. FAD serves as cofactor. It depends on FMN as a cofactor.

It carries out the reaction 2 L-glutamate + NAD(+) = L-glutamine + 2-oxoglutarate + NADH + H(+). It functions in the pathway amino-acid biosynthesis; L-glutamate biosynthesis via GLT pathway; L-glutamate from 2-oxoglutarate and L-glutamine (NAD(+) route): step 1/1. It participates in energy metabolism; nitrogen metabolism. With respect to regulation, inhibited by homocysteine sulfonamide. Forms L-glutamate from L-glutamine and 2-oxoglutarate. Represents an alternative pathway to L-glutamate dehydrogenase for the biosynthesis of L-glutamate. Participates with glutamine synthetase in ammonia assimilation processes. The enzyme is specific for NADH, L-glutamine and 2-oxoglutarate. This chain is Glutamate synthase [NADH] (GLT1), found in Saccharomyces cerevisiae (strain ATCC 204508 / S288c) (Baker's yeast).